The primary structure comprises 198 residues: Imidazole glycerol phosphate synthase subunit HisH (198 aa).

The Glutamine amidotransferase type-1 domain maps to 2 to 198 (KALLIDYGSG…ALARRYFEVL (197 aa)). Residue cysteine 80 is the Nucleophile of the active site. Catalysis depends on residues histidine 176 and glutamate 178.

Heterodimer of HisH and HisF.

It is found in the cytoplasm. It carries out the reaction 5-[(5-phospho-1-deoxy-D-ribulos-1-ylimino)methylamino]-1-(5-phospho-beta-D-ribosyl)imidazole-4-carboxamide + L-glutamine = D-erythro-1-(imidazol-4-yl)glycerol 3-phosphate + 5-amino-1-(5-phospho-beta-D-ribosyl)imidazole-4-carboxamide + L-glutamate + H(+). It catalyses the reaction L-glutamine + H2O = L-glutamate + NH4(+). It functions in the pathway amino-acid biosynthesis; L-histidine biosynthesis; L-histidine from 5-phospho-alpha-D-ribose 1-diphosphate: step 5/9. In terms of biological role, IGPS catalyzes the conversion of PRFAR and glutamine to IGP, AICAR and glutamate. The HisH subunit catalyzes the hydrolysis of glutamine to glutamate and ammonia as part of the synthesis of IGP and AICAR. The resulting ammonia molecule is channeled to the active site of HisF. The protein is Imidazole glycerol phosphate synthase subunit HisH of Thermus thermophilus (strain ATCC BAA-163 / DSM 7039 / HB27).